Consider the following 131-residue polypeptide: Small ribosomal subunit protein uS8 (131 aa).

It belongs to the universal ribosomal protein uS8 family. In terms of assembly, part of the 30S ribosomal subunit. Contacts proteins S5 and S12.

Functionally, one of the primary rRNA binding proteins, it binds directly to 16S rRNA central domain where it helps coordinate assembly of the platform of the 30S subunit. The sequence is that of Small ribosomal subunit protein uS8 from Nitrosomonas eutropha (strain DSM 101675 / C91 / Nm57).